The primary structure comprises 454 residues: Aspartate aminotransferase P2, mitochondrial (454 aa).

The transit peptide at 1–49 (SSLLSIPSLSLQYNDKLKVGGNSLRFSKEQSNTFSNAKSSCRISMVAAV) directs the protein to the mitochondrion. The L-aspartate site is built by glycine 86, tryptophan 182, and asparagine 235. Lysine 299 carries the N6-(pyridoxal phosphate)lysine modification. Arginine 428 is a binding site for L-aspartate.

This sequence belongs to the class-I pyridoxal-phosphate-dependent aminotransferase family. In terms of assembly, homodimer. It depends on pyridoxal 5'-phosphate as a cofactor.

It localises to the mitochondrion matrix. It catalyses the reaction L-aspartate + 2-oxoglutarate = oxaloacetate + L-glutamate. Its function is as follows. Important for the metabolism of amino acids and Krebs-cycle related organic acids. In plants, it is involved in nitrogen metabolism and in aspects of carbon and energy metabolism. This chain is Aspartate aminotransferase P2, mitochondrial, found in Lupinus angustifolius (Narrow-leaved blue lupine).